The chain runs to 307 residues: Pantothenate kinase (307 aa).

Residue 90-97 participates in ATP binding; it reads GSVAVGKS.

Belongs to the prokaryotic pantothenate kinase family.

The protein resides in the cytoplasm. The enzyme catalyses (R)-pantothenate + ATP = (R)-4'-phosphopantothenate + ADP + H(+). The protein operates within cofactor biosynthesis; coenzyme A biosynthesis; CoA from (R)-pantothenate: step 1/5. The protein is Pantothenate kinase of Enterococcus faecalis (strain ATCC 700802 / V583).